We begin with the raw amino-acid sequence, 256 residues long: uncharacterized protein (256 aa).

The stretch at 213 to 243 forms a coiled coil; sequence TMSMEAKLEAAKKTLEKFKQEAASKRAKRTK. Residues 231–256 are disordered; sequence KQEAASKRAKRTKPSGSKTTRSTGRK. The span at 244-256 shows a compositional bias: polar residues; it reads PSGSKTTRSTGRK.

This is an uncharacterized protein from Acanthamoeba polyphaga (Amoeba).